The chain runs to 487 residues: WAS/WASL-interacting protein family member 1 (487 aa).

Residues 1 to 14 are compositionally biased toward pro residues; the sequence is MPVPPPPAPPPPPT. The tract at residues 1–487 is disordered; the sequence is MPVPPPPAPP…GAPPLPPIPR (487 aa). The span at 21–31 shows a compositional bias: polar residues; the sequence is EKPSLNKTEQA. The WH2 domain occupies 32 to 49; it reads GRNALLSDISKGKKLKKT. Asymmetric dimethylarginine is present on R33. Residues 45–48 are binds actin; sequence KLKK. Residues 64–100 are compositionally biased toward gly residues; the sequence is GAGGGYGGGSGGGGGGGSSGGGGNFGGGGPPGLGGLF. 2 positions are modified to omega-N-methylarginine: R121 and R130. The segment covering 136–147 has biased composition (low complexity); sequence PFSSPSGPGRFP. Residue S138 is modified to Phosphoserine. Pro residues-rich tracts occupy residues 157–170 and 178–190; these read PPEP…PPRP and SLPP…PRPI. At S222 the chain carries Phosphoserine. Pro residues-rich tracts occupy residues 234 to 243, 269 to 285, and 293 to 309; these read FPRPPLPPTP, VPPP…PSTP, and APPP…PLPP. Phosphoserine is present on S324. Positions 328-355 are enriched in pro residues; that stretch reads PTPPLPSPGRSGPLPPPPTERPPPPVRD. Position 329 is a phosphothreonine (T329). S334 is modified (phosphoserine). 3 XRSGPXPPXP motif repeats span residues 336–345, 358–367, and 394–403; these read GRSGPLPPPP and PRSGPRPPLP. The span at 397-418 shows a compositional bias: pro residues; sequence GPRPPLPPDRPGAGAPPPPPPS. Residues 419 to 428 are compositionally biased toward polar residues; sequence TSVRNGFQDS. Positions 464–478 are enriched in basic and acidic residues; the sequence is ARSESRSGSNRRERG.

Belongs to the verprolin family. In terms of assembly, binds to WAS within the N-terminal region, at a site distinct from the CDC42-binding site. Binds profilin and actin. Interacts with DBNL. Binds to WASL. Interacts with DBNL. Interacts with FNBP1L (via the SH3 domain). As to expression, isoforms were differentially expressed. One isoform was ubiquitously expressed, another was muscle-specific and another was expressed in the liver, heart and testis.

The protein resides in the cytoplasmic vesicle. The protein localises to the cytoplasm. Its subcellular location is the cytoskeleton. It is found in the cell projection. It localises to the ruffle. Functionally, plays a role in the reorganization of the actin cytoskeleton. Contributes with NCK1 and GRB2 in the recruitment and activation of WASL. Plays a role in the formation of cell ruffles. May participate in regulating the subcellular localization of WASL, resulting in the disassembly of stress fibers in favor of filopodia formation. In Rattus norvegicus (Rat), this protein is WAS/WASL-interacting protein family member 1 (Wipf1).